The chain runs to 255 residues: Protein C activator (255 aa).

Residues M1–A18 form the signal peptide. The propeptide occupies Q19–L24. Positions V25–S246 constitute a Peptidase S1 domain. 6 disulfide bridges follow: C31–C162, C49–C65, C97–C253, C141–C207, C173–C186, and C197–C222. N45 is a glycosylation site (N-linked (GlcNAc...) asparagine). Catalysis depends on H64, which acts as the Charge relay system. Residue N102 is glycosylated (N-linked (GlcNAc...) asparagine). D109 acts as the Charge relay system in catalysis. N-linked (GlcNAc...) asparagine glycosylation occurs at N153. The Charge relay system role is filled by S201.

The protein belongs to the peptidase S1 family. Snake venom subfamily. Monomer. In terms of tissue distribution, expressed by the venom gland.

The protein resides in the secreted. Snake venom serine protease that selectively cleaves the heavy chain of protein C (PROC). This activation is thrombomodulin-independent. The chain is Protein C activator from Agkistrodon piscivorus leucostoma (Western cottonmouth).